Reading from the N-terminus, the 167-residue chain is Small ribosomal subunit protein uS5 (167 aa).

Residues 12-75 enclose the S5 DRBM domain; it reads LQEKLITVNR…EQARRNMITI (64 aa).

This sequence belongs to the universal ribosomal protein uS5 family. Part of the 30S ribosomal subunit. Contacts proteins S4 and S8.

In terms of biological role, with S4 and S12 plays an important role in translational accuracy. Located at the back of the 30S subunit body where it stabilizes the conformation of the head with respect to the body. In Buchnera aphidicola subsp. Acyrthosiphon pisum (strain APS) (Acyrthosiphon pisum symbiotic bacterium), this protein is Small ribosomal subunit protein uS5.